We begin with the raw amino-acid sequence, 316 residues long: Acetaldehyde dehydrogenase (316 aa).

11–14 (SGNI) contributes to the NAD(+) binding site. The Acyl-thioester intermediate role is filled by C131. NAD(+) contacts are provided by residues 162–170 (SAGPGTRAN) and N289.

Belongs to the acetaldehyde dehydrogenase family. As to quaternary structure, interacts with MhpE.

The enzyme catalyses acetaldehyde + NAD(+) + CoA = acetyl-CoA + NADH + H(+). It participates in aromatic compound metabolism; 3-phenylpropanoate degradation. Functionally, catalyzes the conversion of acetaldehyde to acetyl-CoA, using NAD(+) and coenzyme A. Is the final enzyme in the meta-cleavage pathway for the degradation of aromatic compounds. The sequence is that of Acetaldehyde dehydrogenase from Klebsiella pneumoniae (strain 342).